Consider the following 367-residue polypeptide: Peptide chain release factor 2 (367 aa).

Q251 is subject to N5-methylglutamine.

Belongs to the prokaryotic/mitochondrial release factor family. Post-translationally, methylated by PrmC. Methylation increases the termination efficiency of RF2.

It is found in the cytoplasm. Peptide chain release factor 2 directs the termination of translation in response to the peptide chain termination codons UGA and UAA. In Nautilia profundicola (strain ATCC BAA-1463 / DSM 18972 / AmH), this protein is Peptide chain release factor 2.